A 60-amino-acid polypeptide reads, in one-letter code: Cytotoxin 2 (60 aa).

4 disulfide bridges follow: cysteine 3–cysteine 21, cysteine 14–cysteine 38, cysteine 42–cysteine 53, and cysteine 54–cysteine 59.

Belongs to the three-finger toxin family. Short-chain subfamily. Type IA cytotoxin sub-subfamily. As to quaternary structure, monomer in solution; Homodimer and oligomer in the presence of negatively charged lipids forming a pore with a size ranging between 20 and 30 Angstroms. Expressed by the venom gland.

The protein resides in the secreted. Its subcellular location is the target cell membrane. Its function is as follows. Shows cytolytic activity on many different cells by forming pore in lipid membranes. In vivo, increases heart rate or kills the animal by cardiac arrest. In addition, it binds to heparin with high affinity, interacts with Kv channel-interacting protein 1 (KCNIP1) in a calcium-independent manner, and binds to integrin alpha-V/beta-3 (ITGAV/ITGB3) with moderate affinity. The sequence is that of Cytotoxin 2 from Naja mossambica (Mozambique spitting cobra).